Reading from the N-terminus, the 430-residue chain is Serine--tRNA ligase (430 aa).

235–237 (TAE) is an L-serine binding site. Residues 266–268 (RRE) and Val282 each bind ATP. Position 289 (Glu289) interacts with L-serine. 353-356 (EASS) is a binding site for ATP. Ser389 is an L-serine binding site.

It belongs to the class-II aminoacyl-tRNA synthetase family. Type-1 seryl-tRNA synthetase subfamily. As to quaternary structure, homodimer. The tRNA molecule binds across the dimer.

Its subcellular location is the cytoplasm. The catalysed reaction is tRNA(Ser) + L-serine + ATP = L-seryl-tRNA(Ser) + AMP + diphosphate + H(+). It catalyses the reaction tRNA(Sec) + L-serine + ATP = L-seryl-tRNA(Sec) + AMP + diphosphate + H(+). It participates in aminoacyl-tRNA biosynthesis; selenocysteinyl-tRNA(Sec) biosynthesis; L-seryl-tRNA(Sec) from L-serine and tRNA(Sec): step 1/1. Its function is as follows. Catalyzes the attachment of serine to tRNA(Ser). Is also able to aminoacylate tRNA(Sec) with serine, to form the misacylated tRNA L-seryl-tRNA(Sec), which will be further converted into selenocysteinyl-tRNA(Sec). This Chlorobium luteolum (strain DSM 273 / BCRC 81028 / 2530) (Pelodictyon luteolum) protein is Serine--tRNA ligase.